A 403-amino-acid polypeptide reads, in one-letter code: Phosphoglycerate kinase (403 aa).

Residues 21–23, arginine 36, 59–62, arginine 119, and arginine 159 each bind substrate; these read DFN and HLGR. Residues lysine 214, glycine 301, glutamate 332, and 359–362 contribute to the ATP site; that span reads GGDS.

The protein belongs to the phosphoglycerate kinase family. As to quaternary structure, monomer.

The protein localises to the cytoplasm. The catalysed reaction is (2R)-3-phosphoglycerate + ATP = (2R)-3-phospho-glyceroyl phosphate + ADP. It functions in the pathway carbohydrate degradation; glycolysis; pyruvate from D-glyceraldehyde 3-phosphate: step 2/5. This Lactobacillus johnsonii (strain CNCM I-12250 / La1 / NCC 533) protein is Phosphoglycerate kinase.